The sequence spans 331 residues: Ketol-acid reductoisomerase (NADP(+)) (331 aa).

A KARI N-terminal Rossmann domain is found at alanine 2–threonine 182. Residues tyrosine 25–glutamine 28, serine 51, serine 53, and aspartate 83–glutamine 86 contribute to the NADP(+) site. Histidine 108 is an active-site residue. Glycine 134 contributes to the NADP(+) binding site. In terms of domain architecture, KARI C-terminal knotted spans asparagine 183 to leucine 328. Mg(2+)-binding residues include aspartate 191, glutamate 195, glutamate 227, and glutamate 231. Serine 252 is a binding site for substrate.

This sequence belongs to the ketol-acid reductoisomerase family. Mg(2+) is required as a cofactor.

It carries out the reaction (2R)-2,3-dihydroxy-3-methylbutanoate + NADP(+) = (2S)-2-acetolactate + NADPH + H(+). The enzyme catalyses (2R,3R)-2,3-dihydroxy-3-methylpentanoate + NADP(+) = (S)-2-ethyl-2-hydroxy-3-oxobutanoate + NADPH + H(+). Its pathway is amino-acid biosynthesis; L-isoleucine biosynthesis; L-isoleucine from 2-oxobutanoate: step 2/4. The protein operates within amino-acid biosynthesis; L-valine biosynthesis; L-valine from pyruvate: step 2/4. Functionally, involved in the biosynthesis of branched-chain amino acids (BCAA). Catalyzes an alkyl-migration followed by a ketol-acid reduction of (S)-2-acetolactate (S2AL) to yield (R)-2,3-dihydroxy-isovalerate. In the isomerase reaction, S2AL is rearranged via a Mg-dependent methyl migration to produce 3-hydroxy-3-methyl-2-ketobutyrate (HMKB). In the reductase reaction, this 2-ketoacid undergoes a metal-dependent reduction by NADPH to yield (R)-2,3-dihydroxy-isovalerate. The chain is Ketol-acid reductoisomerase (NADP(+)) from Synechococcus sp. (strain CC9311).